A 284-amino-acid polypeptide reads, in one-letter code: RNase adapter protein RapZ (284 aa).

Position 8-15 (8-15 (GRSGSGKS)) interacts with ATP. GTP is bound at residue 56-59 (DVRN). The segment at 266–284 (RSRGKNVQSRHRTLEKRKS) is RNA-binding.

This sequence belongs to the RapZ-like family. RapZ subfamily. As to quaternary structure, homotrimer.

In terms of biological role, modulates the synthesis of GlmS, by affecting the processing and stability of the regulatory small RNA GlmZ. When glucosamine-6-phosphate (GlcN6P) concentrations are high in the cell, RapZ binds GlmZ and targets it to cleavage by RNase E. Consequently, GlmZ is inactivated and unable to activate GlmS synthesis. Under low GlcN6P concentrations, RapZ is sequestered and inactivated by an other regulatory small RNA, GlmY, preventing GlmZ degradation and leading to synthesis of GlmS. This chain is RNase adapter protein RapZ, found in Klebsiella pneumoniae (strain 342).